Reading from the N-terminus, the 204-residue chain is Tat proofreading chaperone DmsD (204 aa).

Belongs to the TorD/DmsD family. DmsD subfamily.

Its function is as follows. Required for biogenesis/assembly of DMSO reductase, but not for the interaction of the DmsA signal peptide with the Tat system. May be part of a chaperone cascade complex that facilitates a folding-maturation pathway for the substrate protein. This chain is Tat proofreading chaperone DmsD, found in Salmonella paratyphi A (strain ATCC 9150 / SARB42).